The chain runs to 358 residues: Phosphoserine aminotransferase (358 aa).

Residue Arg-41 coordinates L-glutamate. Residues 75–76, Trp-100, Thr-148, Asp-167, and Gln-190 each bind pyridoxal 5'-phosphate; that span reads AS. Lys-191 carries the post-translational modification N6-(pyridoxal phosphate)lysine. 233 to 234 serves as a coordination point for pyridoxal 5'-phosphate; it reads NT.

The protein belongs to the class-V pyridoxal-phosphate-dependent aminotransferase family. SerC subfamily. In terms of assembly, homodimer. It depends on pyridoxal 5'-phosphate as a cofactor.

Its subcellular location is the cytoplasm. It catalyses the reaction O-phospho-L-serine + 2-oxoglutarate = 3-phosphooxypyruvate + L-glutamate. The catalysed reaction is 4-(phosphooxy)-L-threonine + 2-oxoglutarate = (R)-3-hydroxy-2-oxo-4-phosphooxybutanoate + L-glutamate. The protein operates within amino-acid biosynthesis; L-serine biosynthesis; L-serine from 3-phospho-D-glycerate: step 2/3. It functions in the pathway cofactor biosynthesis; pyridoxine 5'-phosphate biosynthesis; pyridoxine 5'-phosphate from D-erythrose 4-phosphate: step 3/5. Its function is as follows. Catalyzes the reversible conversion of 3-phosphohydroxypyruvate to phosphoserine and of 3-hydroxy-2-oxo-4-phosphonooxybutanoate to phosphohydroxythreonine. The protein is Phosphoserine aminotransferase of Campylobacter jejuni subsp. jejuni serotype O:2 (strain ATCC 700819 / NCTC 11168).